Reading from the N-terminus, the 291-residue chain is Phosphoribosylaminoimidazole-succinocarboxamide synthase (291 aa).

The protein belongs to the SAICAR synthetase family.

The catalysed reaction is 5-amino-1-(5-phospho-D-ribosyl)imidazole-4-carboxylate + L-aspartate + ATP = (2S)-2-[5-amino-1-(5-phospho-beta-D-ribosyl)imidazole-4-carboxamido]succinate + ADP + phosphate + 2 H(+). Its pathway is purine metabolism; IMP biosynthesis via de novo pathway; 5-amino-1-(5-phospho-D-ribosyl)imidazole-4-carboxamide from 5-amino-1-(5-phospho-D-ribosyl)imidazole-4-carboxylate: step 1/2. This chain is Phosphoribosylaminoimidazole-succinocarboxamide synthase (ADE1), found in Candida maltosa (Yeast).